We begin with the raw amino-acid sequence, 156 residues long: Ribosomal RNA large subunit methyltransferase H (156 aa).

Residues leucine 72, glycine 104, and leucine 123–phenylalanine 128 each bind S-adenosyl-L-methionine.

The protein belongs to the RNA methyltransferase RlmH family. As to quaternary structure, homodimer.

It localises to the cytoplasm. The catalysed reaction is pseudouridine(1915) in 23S rRNA + S-adenosyl-L-methionine = N(3)-methylpseudouridine(1915) in 23S rRNA + S-adenosyl-L-homocysteine + H(+). In terms of biological role, specifically methylates the pseudouridine at position 1915 (m3Psi1915) in 23S rRNA. The chain is Ribosomal RNA large subunit methyltransferase H from Nitratidesulfovibrio vulgaris (strain ATCC 29579 / DSM 644 / CCUG 34227 / NCIMB 8303 / VKM B-1760 / Hildenborough) (Desulfovibrio vulgaris).